Here is a 261-residue protein sequence, read N- to C-terminus: Cytochrome c oxidase subunit 3 (261 aa).

Over 1–15 (MTHQTHACHMVNPSP) the chain is Mitochondrial matrix. The helical transmembrane segment at 16–34 (WPLTGALSGLLMTSGLIMW) threads the bilayer. Residues 35–40 (FHFNST) lie on the Mitochondrial intermembrane side of the membrane. The chain crosses the membrane as a helical span at residues 41-66 (TLLMLGLTTNMLTMYQWWRDVIREST). Residues 67–72 (FQGHHT) are Mitochondrial matrix-facing. The chain crosses the membrane as a helical span at residues 73–105 (PNVQKGLRYGMILFIISEVLFFTGFFWAFYHSS). The Mitochondrial intermembrane portion of the chain corresponds to 106 to 128 (LAPTPELGGCWPPTGIHPLNPLE). A helical transmembrane segment spans residues 129–152 (VPLLNTSVLLASGVSITWAHHSLM). Over 153–155 (EGN) the chain is Mitochondrial matrix. The chain crosses the membrane as a helical span at residues 156–183 (RNHMLQALFITIALGVYFTLLQASEYYE). Residues 184-190 (APFTISD) lie on the Mitochondrial intermembrane side of the membrane. The helical transmembrane segment at 191–223 (GVYGSTFFVATGFHGLHVIIGSTFLIVCFFRQL) threads the bilayer. Residues 224-232 (KFHFTSSHH) are Mitochondrial matrix-facing. A helical transmembrane segment spans residues 233-256 (FGFEAAAWYWHFVDVVWLFLYVSI). Topologically, residues 257 to 261 (YWWGS) are mitochondrial intermembrane.

This sequence belongs to the cytochrome c oxidase subunit 3 family. Component of the cytochrome c oxidase (complex IV, CIV), a multisubunit enzyme composed of 14 subunits. The complex is composed of a catalytic core of 3 subunits MT-CO1, MT-CO2 and MT-CO3, encoded in the mitochondrial DNA, and 11 supernumerary subunits COX4I, COX5A, COX5B, COX6A, COX6B, COX6C, COX7A, COX7B, COX7C, COX8 and NDUFA4, which are encoded in the nuclear genome. The complex exists as a monomer or a dimer and forms supercomplexes (SCs) in the inner mitochondrial membrane with NADH-ubiquinone oxidoreductase (complex I, CI) and ubiquinol-cytochrome c oxidoreductase (cytochrome b-c1 complex, complex III, CIII), resulting in different assemblies (supercomplex SCI(1)III(2)IV(1) and megacomplex MCI(2)III(2)IV(2)).

It is found in the mitochondrion inner membrane. The catalysed reaction is 4 Fe(II)-[cytochrome c] + O2 + 8 H(+)(in) = 4 Fe(III)-[cytochrome c] + 2 H2O + 4 H(+)(out). Component of the cytochrome c oxidase, the last enzyme in the mitochondrial electron transport chain which drives oxidative phosphorylation. The respiratory chain contains 3 multisubunit complexes succinate dehydrogenase (complex II, CII), ubiquinol-cytochrome c oxidoreductase (cytochrome b-c1 complex, complex III, CIII) and cytochrome c oxidase (complex IV, CIV), that cooperate to transfer electrons derived from NADH and succinate to molecular oxygen, creating an electrochemical gradient over the inner membrane that drives transmembrane transport and the ATP synthase. Cytochrome c oxidase is the component of the respiratory chain that catalyzes the reduction of oxygen to water. Electrons originating from reduced cytochrome c in the intermembrane space (IMS) are transferred via the dinuclear copper A center (CU(A)) of subunit 2 and heme A of subunit 1 to the active site in subunit 1, a binuclear center (BNC) formed by heme A3 and copper B (CU(B)). The BNC reduces molecular oxygen to 2 water molecules using 4 electrons from cytochrome c in the IMS and 4 protons from the mitochondrial matrix. In Gazella saudiya (Saudi gazelle), this protein is Cytochrome c oxidase subunit 3 (MT-CO3).